Reading from the N-terminus, the 198-residue chain is MAALTAENFAALQSLLKASSKDVVRQLCQESFSSSALGSKNLLDVTCSSLSVTQEEAEQLLQALHRLTRLAVFRDLSSAEAILALFPENFHQNLKNLLTKIILEHVSAWRAEAQVNQISLPRLVDLDWRVDIKTSSDSISRMAVPTCLLQMKIQEDPSLCGDRPSVSDVTVELSKETLDTMLDGLGRIRDQLSAVASK.

Residue Ala-2 is modified to N-acetylalanine. One can recognise a COMM domain in the interval 122 to 196 (RLVDLDWRVD…RIRDQLSAVA (75 aa)).

This sequence belongs to the COMM domain-containing protein 9 family. Component of the commander complex consisting of the CCC subcomplex and the retriever subcomplex. Component of the CCC (COMMD/CCDC22/CCDC93) subcomplex consisting of COMMD1, COMMD2, COMMD3, COMMD4, COMMD5, COMMD6, COMMD7, COMMD8, COMMD9, COMMD10, CCDC22 and CCDC93; within the complex forms a heterodimer with COMMD7. Interacts with RELB and NFKB1/p105. Interacts with CCDC22, CCDC93, SCNN1B, CUL1.

Its subcellular location is the nucleus. It localises to the cytoplasmic vesicle. In terms of biological role, scaffold protein in the commander complex that is essential for endosomal recycling of transmembrane cargos; the commander complex is composed of the CCC subcomplex and the retriever subcomplex. May modulate activity of cullin-RING E3 ubiquitin ligase (CRL) complexes. May down-regulate activation of NF-kappa-B. Modulates Na(+) transport in epithelial cells by regulation of apical cell surface expression of amiloride-sensitive sodium channel (ENaC) subunits. The sequence is that of COMM domain-containing protein 9 (COMMD9) from Bos taurus (Bovine).